A 566-amino-acid chain; its full sequence is NAD-dependent malic enzyme (566 aa).

The active-site Proton donor is Tyr104. Arg157 contacts NAD(+). The Proton acceptor role is filled by Lys175. Residues Glu246, Asp247, and Asp270 each contribute to the a divalent metal cation site. NAD(+) is bound by residues Asp270 and Asn419.

It belongs to the malic enzymes family. Homotetramer. The cofactor is Mg(2+). Requires Mn(2+) as cofactor.

The catalysed reaction is (S)-malate + NAD(+) = pyruvate + CO2 + NADH. The enzyme catalyses oxaloacetate + H(+) = pyruvate + CO2. The protein is NAD-dependent malic enzyme of Cronobacter sakazakii (strain ATCC BAA-894) (Enterobacter sakazakii).